Reading from the N-terminus, the 492-residue chain is Trigger factor (492 aa).

In terms of domain architecture, PPIase FKBP-type spans 164 to 249; the sequence is GDLVVVDFVG…VSDVRVPRKA (86 aa). Positions 440 to 492 are disordered; the sequence is EAEEDSIGKHDHDHDHKEKASDKPKAKKAAAPKKKAAPKKKAAPKAEKKSSDE. Basic and acidic residues predominate over residues 445 to 463; sequence SIGKHDHDHDHKEKASDKP. The span at 464–482 shows a compositional bias: basic residues; sequence KAKKAAAPKKKAAPKKKAA. Positions 483–492 are enriched in basic and acidic residues; that stretch reads PKAEKKSSDE.

This sequence belongs to the FKBP-type PPIase family. Tig subfamily.

The protein localises to the cytoplasm. The catalysed reaction is [protein]-peptidylproline (omega=180) = [protein]-peptidylproline (omega=0). Involved in protein export. Acts as a chaperone by maintaining the newly synthesized protein in an open conformation. Functions as a peptidyl-prolyl cis-trans isomerase. The polypeptide is Trigger factor (Zymomonas mobilis subsp. mobilis (strain ATCC 31821 / ZM4 / CP4)).